Here is a 430-residue protein sequence, read N- to C-terminus: S-adenosylmethionine synthase (430 aa).

An ATP-binding site is contributed by His14. Residue Asp16 participates in Mg(2+) binding. Position 42 (Glu42) interacts with K(+). The L-methionine site is built by Glu55 and Gln98. The interval 98–108 (QSPDINRGVER) is flexible loop. Residues 164–166 (DAK), 254–255 (KF), Asp263, 269–270 (RK), Ala286, and Lys290 each bind ATP. Position 263 (Asp263) interacts with L-methionine. Lys294 is a binding site for L-methionine.

Belongs to the AdoMet synthase family. As to quaternary structure, homotetramer; dimer of dimers. Requires Mg(2+) as cofactor. It depends on K(+) as a cofactor.

The protein localises to the cytoplasm. The enzyme catalyses L-methionine + ATP + H2O = S-adenosyl-L-methionine + phosphate + diphosphate. Its pathway is amino-acid biosynthesis; S-adenosyl-L-methionine biosynthesis; S-adenosyl-L-methionine from L-methionine: step 1/1. Catalyzes the formation of S-adenosylmethionine (AdoMet) from methionine and ATP. The overall synthetic reaction is composed of two sequential steps, AdoMet formation and the subsequent tripolyphosphate hydrolysis which occurs prior to release of AdoMet from the enzyme. The polypeptide is S-adenosylmethionine synthase (Bacteroides thetaiotaomicron (strain ATCC 29148 / DSM 2079 / JCM 5827 / CCUG 10774 / NCTC 10582 / VPI-5482 / E50)).